The sequence spans 554 residues: Hydroxylamine reductase (554 aa).

The [2Fe-2S] cluster site is built by Cys-3, Cys-6, Cys-18, and Cys-25. The hybrid [4Fe-2O-2S] cluster site is built by His-252, Glu-276, Cys-320, Cys-408, Cys-436, Cys-461, Glu-495, and Lys-497. Cys-408 bears the Cysteine persulfide mark.

It belongs to the HCP family. The cofactor is [2Fe-2S] cluster. Requires hybrid [4Fe-2O-2S] cluster as cofactor.

Its subcellular location is the cytoplasm. It carries out the reaction A + NH4(+) + H2O = hydroxylamine + AH2 + H(+). In terms of biological role, catalyzes the reduction of hydroxylamine to form NH(3) and H(2)O. This Shewanella oneidensis (strain ATCC 700550 / JCM 31522 / CIP 106686 / LMG 19005 / NCIMB 14063 / MR-1) protein is Hydroxylamine reductase.